We begin with the raw amino-acid sequence, 424 residues long: Ubiquitin carboxyl-terminal hydrolase 12/46 homolog (424 aa).

The region spanning 24 to 421 (FGLVNFGNTC…TGYILFYQSR (398 aa)) is the USP domain. Cysteine 33 functions as the Nucleophile in the catalytic mechanism. The segment at 131 to 189 (NAGPSNGNPKATNQGGSTSAMASSIASKSSSTSNSNSNSNSTTNSNGNSSNSTGSLNAN) is disordered. Residues 133–144 (GPSNGNPKATNQ) show a composition bias toward polar residues. Positions 145–189 (GGSTSAMASSIASKSSSTSNSNSNSNSTTNSNGNSSNSTGSLNAN) are enriched in low complexity. The Proton acceptor role is filled by histidine 369.

This sequence belongs to the peptidase C19 family. Catalytic component of the Usp12-46 deubiquitylase complex consisting of Usp12-46, Wdr20 and Uaf1. The Usp12-46 deubiquitylase complex associates with arr/arrow; the interaction leads to deubiquitination and stabilization of arr/arrow.

The enzyme catalyses Thiol-dependent hydrolysis of ester, thioester, amide, peptide and isopeptide bonds formed by the C-terminal Gly of ubiquitin (a 76-residue protein attached to proteins as an intracellular targeting signal).. In terms of biological role, catalytic component of the Usp12-46 deubiquitylase complex. Deubiquitylates the wg/wingless-signaling receptor arr/arrow, which stabilizes the receptor and increases its concentration at the cell surface; this enhances the sensitivity of cells to wg/wingless-signal stimulation. This increases the amplitude and spatial range of the signaling response to the wg/wingless morphogen gradient, facilitating the precise, concentration-dependent regulation of its target genes. Required for wg/wingless-mediated signaling in the wing imaginal disc and for wg/wingless-dependent regulation of adult intestinal stem cell proliferation. Negative regulator of Notch signaling, possibly by regulating lysosomal degradation of N/Notch and affecting cell surface receptor levels; this may be context and cell-type specific function involved in external sensory organ development but not in wing imaginal-disc dorsoventral boundary signaling. Protects against HTT/huntingtin-induced polyglutamine expansion-dependent neurodegeneration. The sequence is that of Ubiquitin carboxyl-terminal hydrolase 12/46 homolog from Drosophila melanogaster (Fruit fly).